Reading from the N-terminus, the 51-residue chain is Large ribosomal subunit protein bL33 (51 aa).

This sequence belongs to the bacterial ribosomal protein bL33 family.

This is Large ribosomal subunit protein bL33 from Marinobacter nauticus (strain ATCC 700491 / DSM 11845 / VT8) (Marinobacter aquaeolei).